We begin with the raw amino-acid sequence, 208 residues long: Myosin light chain 6B (208 aa).

The interval 1–51 (MPPKKDVPVKKPAGPSISKPAAKPAAAGAPPAKTKAEPAVPQAPQKTQEPP) is disordered. The segment covering 10–40 (KKPAGPSISKPAAKPAAAGAPPAKTKAEPAV) has biased composition (low complexity). 3 EF-hand domains span residues 64–99 (DQLE…LGQN), 141–176 (GTYE…LGEK), and 176–208 (KMTE…ILSV).

As to quaternary structure, myosin is a hexamer of 2 heavy chains and 4 light chains.

In terms of biological role, regulatory light chain of myosin. Does not bind calcium. The chain is Myosin light chain 6B (MYL6B) from Homo sapiens (Human).